The sequence spans 226 residues: uncharacterized protein (226 aa).

A helical transmembrane segment spans residues 121 to 141 (YLIGNIIGLPLTIPFILIPLI).

To yeast YDL183c.

Its subcellular location is the membrane. This is an uncharacterized protein from Schizosaccharomyces pombe (strain 972 / ATCC 24843) (Fission yeast).